The primary structure comprises 383 residues: tRNA-specific 2-thiouridylase MnmA (383 aa).

ATP contacts are provided by residues 11 to 18 and M37; that span reads GLSGGVDS. Positions 97 to 99 are interaction with target base in tRNA; sequence NPD. C102 acts as the Nucleophile in catalysis. C102 and C200 form a disulfide bridge. G127 contributes to the ATP binding site. Residues 150 to 152 form an interaction with tRNA region; that stretch reads KDQ. The Cysteine persulfide intermediate role is filled by C200. An interaction with tRNA region spans residues 312–313; sequence RY. The disordered stretch occupies residues 361–383; it reads IDTAHPADRSAPPALQTQSTEVV.

The protein belongs to the MnmA/TRMU family.

The protein resides in the cytoplasm. The enzyme catalyses S-sulfanyl-L-cysteinyl-[protein] + uridine(34) in tRNA + AH2 + ATP = 2-thiouridine(34) in tRNA + L-cysteinyl-[protein] + A + AMP + diphosphate + H(+). Functionally, catalyzes the 2-thiolation of uridine at the wobble position (U34) of tRNA, leading to the formation of s(2)U34. In Halorhodospira halophila (strain DSM 244 / SL1) (Ectothiorhodospira halophila (strain DSM 244 / SL1)), this protein is tRNA-specific 2-thiouridylase MnmA.